Consider the following 130-residue polypeptide: Histone H2A type 2-A (130 aa).

The disordered stretch occupies residues methionine 1–alanine 22. The residue at position 2 (serine 2) is an N-acetylserine. At serine 2 the chain carries Phosphoserine; by RPS6KA5. Arginine 4 carries the citrulline; alternate modification. The residue at position 4 (arginine 4) is a Symmetric dimethylarginine; by PRMT5; alternate. N6-(2-hydroxyisobutyryl)lysine; alternate occurs at positions 6 and 10. An N6-(beta-hydroxybutyryl)lysine; alternate modification is found at lysine 6. An N6-acetyllysine; alternate modification is found at lysine 6. The segment covering glutamine 7 to serine 19 has biased composition (basic residues). Lysine 10 carries the N6-lactoyllysine; alternate modification. N6-succinyllysine; alternate is present on lysine 10. Residues lysine 14 and lysine 16 each participate in a glycyl lysine isopeptide (Lys-Gly) (interchain with G-Cter in ubiquitin) cross-link. Lysine 37 carries the post-translational modification N6-(2-hydroxyisobutyryl)lysine; alternate. The residue at position 37 (lysine 37) is an N6-(beta-hydroxybutyryl)lysine; alternate. Lysine 37 bears the N6-crotonyllysine; alternate mark. N6-(2-hydroxyisobutyryl)lysine occurs at positions 75 and 76. Lysine 96 carries the post-translational modification N6-(2-hydroxyisobutyryl)lysine; alternate. At lysine 96 the chain carries N6-succinyllysine; alternate. Lysine 96 is modified (N6-glutaryllysine; alternate). Position 100 is an N6-glutaryllysine (lysine 100). At glutamine 105 the chain carries N5-methylglutamine. N6-(2-hydroxyisobutyryl)lysine; alternate is present on lysine 119. An N6-crotonyllysine; alternate mark is found at lysine 119 and lysine 120. Lysine 119 and lysine 120 each carry N6-glutaryllysine; alternate. Lysine 120 carries the post-translational modification N6-(beta-hydroxybutyryl)lysine; alternate. Lysine 120 participates in a covalent cross-link: Glycyl lysine isopeptide (Lys-Gly) (interchain with G-Cter in ubiquitin); alternate. Threonine 121 is subject to Phosphothreonine; by DCAF1. Lysine 126 is modified (N6-(beta-hydroxybutyryl)lysine; alternate). The residue at position 126 (lysine 126) is an N6-crotonyllysine; alternate. Lysine 126 bears the N6-glutaryllysine; alternate mark.

Belongs to the histone H2A family. In terms of assembly, the nucleosome is a histone octamer containing two molecules each of H2A, H2B, H3 and H4 assembled in one H3-H4 heterotetramer and two H2A-H2B heterodimers. The octamer wraps approximately 147 bp of DNA. Deiminated on Arg-4 in granulocytes upon calcium entry. Post-translationally, monoubiquitination of Lys-120 (H2AK119Ub) by RING1, TRIM37 and RNF2/RING2 complex gives a specific tag for epigenetic transcriptional repression and participates in X chromosome inactivation of female mammals. It is involved in the initiation of both imprinted and random X inactivation. Ubiquitinated H2A is enriched in inactive X chromosome chromatin. Ubiquitination of H2A functions downstream of methylation of 'Lys-27' of histone H3 (H3K27me). H2AK119Ub by RNF2/RING2 can also be induced by ultraviolet and may be involved in DNA repair. Following DNA double-strand breaks (DSBs), it is ubiquitinated through 'Lys-63' linkage of ubiquitin moieties by the E2 ligase UBE2N and the E3 ligases RNF8 and RNF168, leading to the recruitment of repair proteins to sites of DNA damage. Ubiquitination at Lys-14 and Lys-16 (H2AK13Ub and H2AK15Ub, respectively) in response to DNA damage is initiated by RNF168 that mediates monoubiquitination at these 2 sites, and 'Lys-63'-linked ubiquitin are then conjugated to monoubiquitin; RNF8 is able to extend 'Lys-63'-linked ubiquitin chains in vitro. H2AK119Ub and ionizing radiation-induced 'Lys-63'-linked ubiquitination (H2AK13Ub and H2AK15Ub) are distinct events. In terms of processing, phosphorylation on Ser-2 (H2AS1ph) is enhanced during mitosis. Phosphorylation on Ser-2 by RPS6KA5/MSK1 directly represses transcription. Acetylation of H3 inhibits Ser-2 phosphorylation by RPS6KA5/MSK1. Phosphorylation at Thr-121 (H2AT120ph) by DCAF1 is present in the regulatory region of many tumor suppresor genes and down-regulates their transcription. Symmetric dimethylation on Arg-4 by the PRDM1/PRMT5 complex may play a crucial role in the germ-cell lineage. Post-translationally, glutamine methylation at Gln-105 (H2AQ104me) by FBL is specifically dedicated to polymerase I. It is present at 35S ribosomal DNA locus and impairs binding of the FACT complex. In terms of processing, crotonylation (Kcr) is specifically present in male germ cells and marks testis-specific genes in post-meiotic cells, including X-linked genes that escape sex chromosome inactivation in haploid cells. Crotonylation marks active promoters and enhancers and confers resistance to transcriptional repressors. It is also associated with post-meiotically activated genes on autosomes. Hydroxybutyrylation of histones is induced by starvation. Post-translationally, lactylated in macrophages by EP300/P300 by using lactoyl-CoA directly derived from endogenous or exogenous lactate, leading to stimulates gene transcription.

The protein localises to the nucleus. It localises to the chromosome. Functionally, core component of nucleosome. Nucleosomes wrap and compact DNA into chromatin, limiting DNA accessibility to the cellular machineries which require DNA as a template. Histones thereby play a central role in transcription regulation, DNA repair, DNA replication and chromosomal stability. DNA accessibility is regulated via a complex set of post-translational modifications of histones, also called histone code, and nucleosome remodeling. The chain is Histone H2A type 2-A (Hist2h2aa1) from Mus musculus (Mouse).